Reading from the N-terminus, the 468-residue chain is 6-phospho-beta-galactosidase (468 aa).

Positions 19, 116, 159, 160, and 297 each coordinate D-galactose 6-phosphate. E160 functions as the Proton donor in the catalytic mechanism. The active-site Nucleophile is the E375. D-galactose 6-phosphate contacts are provided by S428, W429, K435, and Y437.

Belongs to the glycosyl hydrolase 1 family.

It catalyses the reaction a 6-phospho-beta-D-galactoside + H2O = D-galactose 6-phosphate + an alcohol. It functions in the pathway carbohydrate metabolism; lactose degradation; D-galactose 6-phosphate and beta-D-glucose from lactose 6-phosphate: step 1/1. This Streptococcus pneumoniae (strain JJA) protein is 6-phospho-beta-galactosidase.